The primary structure comprises 51 residues: Insulin (51 aa).

Intrachain disulfides connect Cys-7-Cys-37, Cys-19-Cys-50, and Cys-36-Cys-41.

The protein belongs to the insulin family. Heterodimer of a B chain and an A chain linked by two disulfide bonds.

It localises to the secreted. Insulin decreases blood glucose concentration. It increases cell permeability to monosaccharides, amino acids and fatty acids. It accelerates glycolysis, the pentose phosphate cycle, and glycogen synthesis in liver. The sequence is that of Insulin (INS) from Elephas maximus (Indian elephant).